The sequence spans 317 residues: Melanocyte-stimulating hormone receptor (317 aa).

At 1–37 the chain is on the extracellular side; the sequence is MRVQGSQRRLLGSLNSTPTATPHLGLAANQTGARCLE. An N-linked (GlcNAc...) asparagine glycan is attached at Asn-29. The helical transmembrane segment at 38–63 threads the bilayer; the sequence is VSIPDGLFLSLGLVSLVENVLVVTAI. Over 64 to 72 the chain is Cytoplasmic; it reads AKNRNLHSP. Residues 73–93 traverse the membrane as a helical segment; the sequence is MYCFICCLALSDLLVSGSNML. Topologically, residues 94-118 are extracellular; sequence ETAVTLLLEAGALAARAAVVQQLDN. Residues 119–140 form a helical membrane-spanning segment; the sequence is VIDVITCSSMLSSLCFLGAIAV. At 141–163 the chain is on the cytoplasmic side; the sequence is DRYISIFYALRYHSIVTLPRARR. The chain crosses the membrane as a helical span at residues 164–183; the sequence is AIAAIWVASVLCSTLFIAYY. Residues 184–191 lie on the Extracellular side of the membrane; that stretch reads DHAAVLLC. Residues 192–211 traverse the membrane as a helical segment; the sequence is LVVFFLAMLVLMAVLYVHML. At 212–240 the chain is on the cytoplasmic side; that stretch reads ARACQHAQGIARLHKRQRLAHQGFGLKGA. The chain crosses the membrane as a helical span at residues 241–266; sequence ATLTILLGIFFLCWGPFFLHLTLIVL. Topologically, residues 267–279 are extracellular; sequence CPQHPTCSCIFKN. The helical transmembrane segment at 280–300 threads the bilayer; it reads FNLFLALIICNAIIDPLIYAF. Topologically, residues 301–317 are cytoplasmic; the sequence is RSQELRRTLKEVLLCSW. Cys-315 carries S-palmitoyl cysteine lipidation.

This sequence belongs to the G-protein coupled receptor 1 family. Interacts with MGRN1, but does not undergo MGRN1-mediated ubiquitination; this interaction competes with GNAS-binding and thus inhibits agonist-induced cAMP production. Interacts with OPN3; the interaction results in a decrease in MC1R-mediated cAMP signaling and ultimately a decrease in melanin production in melanocytes.

It is found in the cell membrane. Its function is as follows. Receptor for MSH (alpha, beta and gamma) and ACTH. The activity of this receptor is mediated by G proteins which activate adenylate cyclase. Mediates melanogenesis, the production of eumelanin (black/brown) and phaeomelanin (red/yellow), via regulation of cAMP signaling in melanocytes. This Macaca nigra (Celebes black macaque) protein is Melanocyte-stimulating hormone receptor (MC1R).